The following is a 116-amino-acid chain: MTDKYENPTSDDYMGVVMGIIMSGGNAKGLAFQAIQQAKAGEFAEAESSLNEASEQLREAHDVQTDLLTRLAQGEKIGWNLYMVHAQDHLMNAITFKDLAVEVVGQEQRLQALENK.

In terms of domain architecture, PTS EIIA type-3 spans 11–109 (DDYMGVVMGI…AVEVVGQEQR (99 aa)). Histidine 85 functions as the Tele-phosphohistidine intermediate in the catalytic mechanism. Histidine 85 carries the phosphohistidine; by HPr modification. Mg(2+) is bound at residue aspartate 88.

Homotrimer. Requires Mg(2+) as cofactor.

Its function is as follows. The phosphoenolpyruvate-dependent sugar phosphotransferase system (sugar PTS), a major carbohydrate active transport system, catalyzes the phosphorylation of incoming sugar substrates concomitantly with their translocation across the cell membrane. Involved in cellobiose transport with PtcB and CelB. This system can also transport lactose. The sequence is that of PTS system cellobiose-specific EIIA component from Lactococcus lactis subsp. lactis (strain IL1403) (Streptococcus lactis).